A 1015-amino-acid polypeptide reads, in one-letter code: Putative calcium-transporting ATPase 7, plasma membrane-type (1015 aa).

Met1 bears the N-acetylmethionine mark. At 1–161 (MESYLNSNFD…NKFAESELRS (161 aa)) the chain is on the cytoplasmic side. An interaction with calmodulin region spans residues 20–31 (VLEKWRNLCSVV). Phosphoserine; by CPK is present on Ser45. Residues 162-182 (FWVFVWEALQDMTLMILGVCA) form a helical membrane-spanning segment. Residues 183 to 200 (FVSLIVGIATEGWPQGSH) lie on the Lumenal side of the membrane. A helical transmembrane segment spans residues 201–221 (DGLGIVASILLVVFVTATSDY). The Cytoplasmic segment spans residues 222 to 349 (RQSLQFRDLD…DDETPLQVKL (128 aa)). The helical transmembrane segment at 350 to 369 (NGVATIIGKIGLSFAIVTFA) threads the bilayer. The Lumenal segment spans residues 370–399 (VLVQGMFMRKLSLGPHWWWSGDDALELLEY). A helical transmembrane segment spans residues 400–417 (FAIAVTIVVVAVPEGLPL). Over 418–811 (AVTLSLAFAM…KWGRSVYINI (394 aa)) the chain is Cytoplasmic. Asp455 functions as the 4-aspartylphosphate intermediate in the catalytic mechanism. 2 residues coordinate Mg(2+): Asp756 and Asp760. The chain crosses the membrane as a helical span at residues 812-830 (QKFVQFQLTVNVVALIVNF). The Lumenal portion of the chain corresponds to 831-841 (SSACLTGSAPL). The helical transmembrane segment at 842–862 (TAVQLLWVNMIMDTLGALALA) threads the bilayer. Over 863–882 (TEPPNNELMKRMPVGRRGNF) the chain is Cytoplasmic. The chain crosses the membrane as a helical span at residues 883 to 905 (ITNAMWRNILGQAVYQFIIIWIL). Topologically, residues 906-917 (QAKGKSMFGLVG) are lumenal. Residues 918–939 (SDSTLVLNTLIFNCFVFCQVFN) form a helical membrane-spanning segment. Topologically, residues 940 to 957 (EVSSREMEEIDVFKGILD) are cytoplasmic. The chain crosses the membrane as a helical span at residues 958–979 (NYVFVVVIGATVFFQIIIIEFL). The Lumenal portion of the chain corresponds to 980 to 989 (GTFASTTPLT). The chain crosses the membrane as a helical span at residues 990 to 1011 (IVQWFFSIFVGFLGMPIAAGLK). Topologically, residues 1012-1015 (KIPV) are cytoplasmic.

This sequence belongs to the cation transport ATPase (P-type) (TC 3.A.3) family. Type IIB subfamily.

The protein localises to the membrane. The catalysed reaction is Ca(2+)(in) + ATP + H2O = Ca(2+)(out) + ADP + phosphate + H(+). With respect to regulation, activated by calmodulin. In terms of biological role, this magnesium-dependent enzyme catalyzes the hydrolysis of ATP coupled with the translocation of calcium from the cytosol out of the cell or into organelles. This chain is Putative calcium-transporting ATPase 7, plasma membrane-type (ACA7), found in Arabidopsis thaliana (Mouse-ear cress).